Consider the following 428-residue polypeptide: Beta-1,3-galactosyl-O-glycosyl-glycoprotein beta-1,6-N-acetylglucosaminyltransferase (428 aa).

The Cytoplasmic portion of the chain corresponds to 1-9; it reads MLRNLFRRR. Residues 5–9 form a mediates interaction with GOLPH3 and is necessary and sufficient for localization to the Golgi region; it reads LFRRR. The chain crosses the membrane as a helical; Signal-anchor for type II membrane protein span at residues 10-32; it reads LFSCPTKYYFMLLVLSLITFSVL. The stem region stretch occupies residues 33–121; the sequence is RIHQKPEFFS…EPLTKEEVGF (89 aa). Topologically, residues 33-428 are lumenal; the sequence is RIHQKPEFFS…RHKALENLEH (396 aa). Asparagine 58 and asparagine 95 each carry an N-linked (GlcNAc...) asparagine glycan. 4 disulfide bridges follow: cysteine 59–cysteine 413, cysteine 100–cysteine 172, cysteine 151–cysteine 199, and cysteine 372–cysteine 381. Residues 122–428 form a catalytic region; the sequence is PIAYSIVVHH…RHKALENLEH (307 aa). Residues 128 to 130, 155 to 157, and tyrosine 187 contribute to the UDP-N-acetyl-alpha-D-glucosamine site; these read VVH and DRK. Residues glutamate 243, asparagine 250, lysine 251, arginine 254, glutamate 320, lysine 341, and tyrosine 358 each contribute to the a glycoprotein site. The active-site Nucleophile is the glutamate 320. UDP-N-acetyl-alpha-D-glucosamine contacts are provided by arginine 378 and lysine 401.

Belongs to the glycosyltransferase 14 family. As to quaternary structure, interacts with GOLPH3; may control GCNT1 retention in the Golgi. In terms of processing, N-glycosylated. As to expression, expressed in kidney, liver, stomach, spleen, lung and brain.

It localises to the golgi apparatus membrane. The catalysed reaction is a 3-O-[beta-D-galactosyl-(1-&gt;3)-N-acetyl-alpha-D-galactosaminyl]-L-seryl-[protein] + UDP-N-acetyl-alpha-D-glucosamine = 3-O-{beta-D-galactosyl-(1-&gt;3)-[N-acetyl-beta-D-glucosaminyl-(1-&gt;6)]-N-acetyl-alpha-D-galactosaminyl}-L-seryl-[protein] + UDP + H(+). It carries out the reaction a 3-O-[beta-D-galactosyl-(1-&gt;3)-N-acetyl-alpha-D-galactosaminyl]-L-threonyl-[protein] + UDP-N-acetyl-alpha-D-glucosamine = a 3-O-{beta-D-galactosyl-(1-&gt;3)-[N-acetyl-beta-D-glucosaminyl-(1-&gt;6)]-N-acetyl-alpha-D-galactosaminyl}-L-threonyl-[protein] + UDP + H(+). The enzyme catalyses a globoside GalGb4Cer + UDP-N-acetyl-alpha-D-glucosamine = a globoside GlcNAc-(beta1-&gt;6)-GalGb4Cer + UDP + H(+). It catalyses the reaction a ganglioside GA1 + UDP-N-acetyl-alpha-D-glucosamine = a ganglioside beta-D-GlcNAc-(1-&gt;6)-GA1 + UDP + H(+). It participates in protein modification; protein glycosylation. It functions in the pathway glycolipid biosynthesis. Inactivated by thiol-reactive agents. Inhibited by free UDP. Glycosyltransferase that catalyzes the transfer of an N-acetylglucosamine (GlcNAc) moiety in beta1-6 linkage from UDP-GlcNAc onto mucin-type core 1 O-glycan to form the branched mucin-type core 2 O-glycan. The catalysis is metal ion-independent and occurs with inversion of the anomeric configuration of sugar donor. Selectively involved in synthesis of mucin-type core 2 O-glycans that serve as scaffolds for the display of selectin ligand sialyl Lewis X epitope by myeloid cells, with an impact on homeostasis and recruitment to inflammatory sites. Can also act on glycolipid substrates. Transfers GlcNAc moiety to GalGb4Cer globosides in a reaction step to the synthesis of stage-specific embryonic antigen 1 (SSEA-1) determinant. Can use Galbeta1-3GalNAcalpha1-R and Galbeta1-3GalNAcbeta1-R oligosaccharide derivatives as acceptor substrates. In Mus musculus (Mouse), this protein is Beta-1,3-galactosyl-O-glycosyl-glycoprotein beta-1,6-N-acetylglucosaminyltransferase (Gcnt1).